The sequence spans 716 residues: MWTLALWAFSFLCKFSLAVLPTKPENISCVFYFDRNLTCTWRPEKETNDTSYIVTLTYSYGKSNYSDNATEASYSFPRSCAMPPDICSVEVQAQNGDGKVKSDITYWHLISIAKTEPPIILSVNPICNRMFQIQWKPREKTRGFPLVCMLRFRTVNSSHWTEVNFENCKQVCNLTGLQAFTEYVLALRFRFNDSRYWSKWSKEETRVTMEEVPHVLDLWRILEPADMNGDRKVRLLWKKARGAPVLEKTFGYHIQYFAENSTNLTEINNITTQQYELLLMSQAHSVSVTSFNSLGKSQEAILRIPDVHEKTFQYIKSMKAYIAEPLLVVNWQSSIPAVDTWIVEWLPEAAMSKFPALSWESVSQVTNWTIEQDKLKPFTCYNISVYPVLGHRVGEPYSIQAYAKEGTPLKGPETRVENIGLRTATITWKEIPKSARNGFINNYTVFYQAEGGKELSKTVNSHALQCDLESLTRRTSYTVWVMASTRAGGTNGVRINFKTLSISVFEIVLLTSLVGGGLLLLSIKTVTFGLRKPNRLTPLCCPDVPNPAESSLATWLGDGFKKSNMKETGNSGDTEDVVLKPCPVPADLIDKLVVNFENFLEVVLTEEAGKGQASILGGEANEYVTSPSRPDGPPGKSFKEPSVLTEVASEDSHSTCSRMADEAYSELARQPSSSCQSPGLSPPREDQAQNPYLKNSVTTREFLVHENIPEHSKGEV.

Positions 1–18 (MWTLALWAFSFLCKFSLA) are cleaved as a signal peptide. Residues 19 to 499 (VLPTKPENIS…TNGVRINFKT (481 aa)) lie on the Extracellular side of the membrane. Fibronectin type-III domains lie at 23–115 (KPEN…IAKT), 117–211 (PPII…TMEE), 213–304 (PHVL…ILRI), 305–403 (PDVH…QAYA), and 408–502 (PLKG…TLSI). N-linked (GlcNAc...) asparagine glycosylation is found at asparagine 36, asparagine 48, and asparagine 64. Asparagine 382 carries N-linked (GlcNAc...) asparagine glycosylation. A helical transmembrane segment spans residues 500–520 (LSISVFEIVLLTSLVGGGLLL). Over 521–716 (LSIKTVTFGL…NIPEHSKGEV (196 aa)) the chain is Cytoplasmic. Disordered stretches follow at residues 622–641 (EYVT…FKEP) and 648–696 (ASED…LKNS). Residues 670-679 (QPSSSCQSPG) show a composition bias toward polar residues.

This sequence belongs to the type I cytokine receptor family. Type 2 subfamily. As to quaternary structure, heterodimer with OSMR. Interacts with JAK1 and STAT3. Post-translationally, N-glycosylated. In terms of tissue distribution, expressed in a subset of dorsal root ganglia neurons. Expressed in spinal cord and trigeminal ganglion (at protein level). Expressed in skin, testis, bone marrow and thymus.

It localises to the cell membrane. It is found in the presynaptic cell membrane. The protein localises to the cell projection. The protein resides in the axon. Associates with OSMR to form the interleukin-31 receptor which activates STAT3 and to a lower extent STAT1 and STAT5. May function in skin immunity. Mediates IL31-induced itch, probably in a manner dependent on cation channels TRPA1 and TRPV1. Positively regulates numbers and cycling status of immature subsets of myeloid progenitor cells in bone marrow in vivo and enhances myeloid progenitor cell survival in vitro. This Mus musculus (Mouse) protein is Interleukin-31 receptor subunit alpha (Il31ra).